A 214-amino-acid chain; its full sequence is Rac-like GTP-binding protein 2 (214 aa).

GTP is bound at residue 14–21 (GDGAVGKT). An Effector region motif is present at residues 36–44 (YIPTVFDNF). GTP is bound by residues 61–65 (DTAGQ) and 119–122 (TKLD).

This sequence belongs to the small GTPase superfamily. Rho family. Post-translationally, may be palmitoylated.

Its subcellular location is the cytoplasm. The protein resides in the membrane. Inactive GDP-bound Rho GTPases reside in the cytosol, are found in a complex with Rho GDP-dissociation inhibitors (Rho GDIs), and are released from the GDI protein in order to translocate to membranes upon activation. The chain is Rac-like GTP-binding protein 2 (RAC2) from Oryza sativa subsp. japonica (Rice).